A 278-amino-acid polypeptide reads, in one-letter code: C-type lectin domain family 1 member A (278 aa).

The interval 1–42 (MLAKYSSTRDMLDADGDTTMSLHSQASATSQRPELGHTEHQR) is disordered. The Cytoplasmic segment spans residues 1 to 52 (MLAKYSSTRDMLDADGDTTMSLHSQASATSQRPELGHTEHQRPSSAWRPVAL). Over residues 18–32 (TTMSLHSQASATSQR) the composition is skewed to polar residues. A helical; Signal-anchor for type II membrane protein membrane pass occupies residues 53-73 (ILLTLCLVLLIGLAALGLVFF). Residues 74-278 (QFYQLSNTQQ…LHEPLSRRWR (205 aa)) lie on the Extracellular side of the membrane. Residues Asn-95 and Asn-169 are each glycosylated (N-linked (GlcNAc...) asparagine). Positions 144–258 (HGDKCYQFYK…CRELRRCACE (115 aa)) constitute a C-type lectin domain. 2 cysteine pairs are disulfide-bonded: Cys-165–Cys-257 and Cys-236–Cys-249.

Its subcellular location is the membrane. The protein is C-type lectin domain family 1 member A (CLEC1A) of Bos taurus (Bovine).